The primary structure comprises 124 residues: Transmembrane protein 254 (124 aa).

3 helical membrane-spanning segments follow: residues 16–36 (LFWVTIIILSFGYYTWVIFWP), 62–82 (VHAWYWLAWMIHVGESLYAIV), and 96–116 (LLWFLQTFLFGLASLYYLIAF).

The protein localises to the membrane. In Bos taurus (Bovine), this protein is Transmembrane protein 254 (TMEM254).